Consider the following 338-residue polypeptide: E3 ubiquitin-protein ligase RING1 (338 aa).

A disordered region spans residues 102–124; that stretch reads TTTSSSASIDPNNPSLSGPTRSG. Polar residues predominate over residues 110-121; the sequence is IDPNNPSLSGPT. The segment at 224–265 adopts an RING-type; atypical zinc-finger fold; it reads CAVCMDDFEEGTEAKQMPCKHLYHKDCLLPWLELHNSCPVCR. Composition is skewed to basic and acidic residues over residues 267 to 279 and 298 to 309; these read ELPT…ERRV and SDGDNRTVERSF. A disordered region spans residues 267 to 338; that stretch reads ELPTDDPDYE…NAETRQEDLD (72 aa).

Auto-ubiquitinated as part of the enzymatic reaction. As to expression, mostly expressed in cotton fibers, and, to a lower extent, in leaves and flowers.

The enzyme catalyses S-ubiquitinyl-[E2 ubiquitin-conjugating enzyme]-L-cysteine + [acceptor protein]-L-lysine = [E2 ubiquitin-conjugating enzyme]-L-cysteine + N(6)-ubiquitinyl-[acceptor protein]-L-lysine.. The protein operates within protein modification; protein ubiquitination. Its function is as follows. E3 ubiquitin-protein ligase which accepts ubiquitin from an E2 ubiquitin-conjugating enzyme in the form of a thioester and then directly transfers the ubiquitin to targeted substrates. Promotes polyubiquitination of target proteins. This Gossypium hirsutum (Upland cotton) protein is E3 ubiquitin-protein ligase RING1 (RING1).